Here is a 686-residue protein sequence, read N- to C-terminus: Phosphatidylinositol 4,5-bisphosphate-binding protein SLM1 (686 aa).

Positions 33 to 147 are disordered; that stretch reads RSMTSADHAN…KQLQGKNSLT (115 aa). A compositionally biased stretch (low complexity) spans 45-63; it reads QQQQQQQQQQQQQQQQQQQ. Over residues 64–126 the composition is skewed to polar residues; it reads SASFQNGSLT…PNIDSNTNVT (63 aa). Over residues 133 to 144 the composition is skewed to low complexity; the sequence is NNNNGKQLQGKN. Phosphoserine is present on residues Ser-145, Ser-150, and Ser-153. Residues 157–172 are compositionally biased toward low complexity; the sequence is SSLQRQRLAQQQQQQQ. A disordered region spans residues 157 to 176; it reads SSLQRQRLAQQQQQQQDPRS. The stretch at 296–381 forms a coiled coil; it reads RLEDLRRDLI…FLHEAFDNLE (86 aa). Residues 468–581 enclose the PH domain; sequence YEIKSGFLER…WFDNLKILTS (114 aa). The disordered stretch occupies residues 626–669; sequence VENDENDDINSNYVGSTVTPKLDNQTNTNTSMSSLPDTNDSELQ. Positions 634–663 are enriched in polar residues; sequence INSNYVGSTVTPKLDNQTNTNTSMSSLPDT. The PXIXIT-like, required for interaction with CNA1 and CNA2, and calcineurin-dependent dephosphorylation signature appears at 673–678; sequence PNIYIQ.

As to quaternary structure, heterodimer of SLM1-SLM2. Binds phosphatidylinositol 4,5-bisphosphate, which is required for function. Interacts with the TORC2 subunits AVO2, BIT61 and TOR2. Interacts with the calcineurin catalytic subunits CNA1 and CNA2. In terms of processing, phosphorylated by the target of rapamycin complex 2 (TORC2) and dephosphorylated by serine/threonine-protein phosphatase 2B (calcineurin). Dephosphorylated in response to the disruption or inhibition of sphingolipid synthesis.

It is found in the cell membrane. In terms of biological role, together with SLM2, acts as an effector of the TORC2- and calcineurin-signaling pathways. Phosphorylated and activated by TORC2 under favorable growth conditions. Mediates actin polarization via inhibition of calcineurin-dependent transcription. Upon nutrient limitation or environmental stress, gets dephosphorylated by calcineurin. Dephosphorylation inhibits its interaction with TORC2, thereby antagonizing TORC2 signaling and mediating calcineurin-dependent actin depolarization. May play a role in the response to the disruption of sphingolipid synthesis, where dephosphorylation of SLM1 leads to the activation and phosphorylation of YPK1 through the TORC2 and PKH1 pathways, which in turn phosphorylates ORM1 and LAG1 to activate sphingolipid synthesis. Also functions in heat-induced, calcineurin-mediated uracil permease (FUR4) endocytosis. The protein is Phosphatidylinositol 4,5-bisphosphate-binding protein SLM1 (SLM1) of Saccharomyces cerevisiae (strain ATCC 204508 / S288c) (Baker's yeast).